The chain runs to 280 residues: Nitrogenase iron protein (280 aa).

ATP is bound at residue 8–15; sequence GKGGIGKS. [4Fe-4S] cluster is bound at residue C95. R98 is modified (ADP-ribosylarginine; by dinitrogenase reductase ADP-ribosyltransferase). C128 serves as a coordination point for [4Fe-4S] cluster.

Belongs to the NifH/BchL/ChlL family. As to quaternary structure, homodimer. It depends on [4Fe-4S] cluster as a cofactor. Post-translationally, the reversible ADP-ribosylation of Arg-98 inactivates the nitrogenase reductase and regulates nitrogenase activity.

The catalysed reaction is N2 + 8 reduced [2Fe-2S]-[ferredoxin] + 16 ATP + 16 H2O = H2 + 8 oxidized [2Fe-2S]-[ferredoxin] + 2 NH4(+) + 16 ADP + 16 phosphate + 6 H(+). Functionally, the key enzymatic reactions in nitrogen fixation are catalyzed by the nitrogenase complex, which has 2 components: the iron protein and the molybdenum-iron protein. The sequence is that of Nitrogenase iron protein from Methanospirillum hungatei JF-1 (strain ATCC 27890 / DSM 864 / NBRC 100397 / JF-1).